The sequence spans 754 residues: Phosphoribosylformylglycinamidine synthase subunit PurL (754 aa).

His54 is an active-site residue. Positions 57 and 101 each coordinate ATP. Glu103 contributes to the Mg(2+) binding site. Residues 104-107 and Arg126 each bind substrate; that span reads SHNH. The active-site Proton acceptor is the His105. Mg(2+) is bound at residue Asp127. Gln252 contributes to the substrate binding site. Residue Asp280 coordinates Mg(2+). Substrate is bound at residue 324-326; the sequence is ESQ. The segment at 386 to 412 is disordered; it reads PVYQRPVSRPESQEALNADSSKGLPRP. Residues Asn512 and Gly549 each coordinate ATP. Residue Asn550 participates in Mg(2+) binding. Ser552 is a binding site for substrate.

This sequence belongs to the FGAMS family. Monomer. Part of the FGAM synthase complex composed of 1 PurL, 1 PurQ and 2 PurS subunits.

It is found in the cytoplasm. The enzyme catalyses N(2)-formyl-N(1)-(5-phospho-beta-D-ribosyl)glycinamide + L-glutamine + ATP + H2O = 2-formamido-N(1)-(5-O-phospho-beta-D-ribosyl)acetamidine + L-glutamate + ADP + phosphate + H(+). The protein operates within purine metabolism; IMP biosynthesis via de novo pathway; 5-amino-1-(5-phospho-D-ribosyl)imidazole from N(2)-formyl-N(1)-(5-phospho-D-ribosyl)glycinamide: step 1/2. Its function is as follows. Part of the phosphoribosylformylglycinamidine synthase complex involved in the purines biosynthetic pathway. Catalyzes the ATP-dependent conversion of formylglycinamide ribonucleotide (FGAR) and glutamine to yield formylglycinamidine ribonucleotide (FGAM) and glutamate. The FGAM synthase complex is composed of three subunits. PurQ produces an ammonia molecule by converting glutamine to glutamate. PurL transfers the ammonia molecule to FGAR to form FGAM in an ATP-dependent manner. PurS interacts with PurQ and PurL and is thought to assist in the transfer of the ammonia molecule from PurQ to PurL. The chain is Phosphoribosylformylglycinamidine synthase subunit PurL from Mycobacterium leprae (strain Br4923).